The following is a 247-amino-acid chain: 5-oxoprolinase subunit A (247 aa).

This sequence belongs to the LamB/PxpA family. As to quaternary structure, forms a complex composed of PxpA, PxpB and PxpC.

It catalyses the reaction 5-oxo-L-proline + ATP + 2 H2O = L-glutamate + ADP + phosphate + H(+). Functionally, catalyzes the cleavage of 5-oxoproline to form L-glutamate coupled to the hydrolysis of ATP to ADP and inorganic phosphate. The chain is 5-oxoprolinase subunit A from Vibrio vulnificus (strain CMCP6).